The chain runs to 128 residues: Early 3 14.7 kDa protein (128 aa).

This sequence belongs to the adenoviridae E3_15 family. As to quaternary structure, may bind to host IKBKG, OPTN and RRAGA.

The protein resides in the host cytoplasm. It is found in the host nucleus. Functionally, may prevent Nf-kappaB activation by immune signals like Tumor necrosis factor, presumably by inhibiting NFKB1 dimer DNA-binding. May act directly at the TNF receptor to inhibit signaling. In Human adenovirus C serotype 2 (HAdV-2), this protein is Early 3 14.7 kDa protein.